Reading from the N-terminus, the 313-residue chain is Ribosomal RNA small subunit methyltransferase H (313 aa).

S-adenosyl-L-methionine contacts are provided by residues 35 to 37 (GGH), aspartate 55, phenylalanine 81, aspartate 103, and glutamine 110.

The protein belongs to the methyltransferase superfamily. RsmH family.

It localises to the cytoplasm. It carries out the reaction cytidine(1402) in 16S rRNA + S-adenosyl-L-methionine = N(4)-methylcytidine(1402) in 16S rRNA + S-adenosyl-L-homocysteine + H(+). Specifically methylates the N4 position of cytidine in position 1402 (C1402) of 16S rRNA. In Pseudomonas paraeruginosa (strain DSM 24068 / PA7) (Pseudomonas aeruginosa (strain PA7)), this protein is Ribosomal RNA small subunit methyltransferase H.